The sequence spans 146 residues: Transcriptional regulator MraZ (146 aa).

SpoVT-AbrB domains lie at His-7–Leu-54 and Gly-83–Ala-126.

Belongs to the MraZ family. In terms of assembly, forms oligomers.

It localises to the cytoplasm. It is found in the nucleoid. The sequence is that of Transcriptional regulator MraZ from Rhizobium meliloti (strain 1021) (Ensifer meliloti).